A 126-amino-acid chain; its full sequence is Holo-[acyl-carrier-protein] synthase (126 aa).

Residues aspartate 9 and glutamate 58 each contribute to the Mg(2+) site.

It belongs to the P-Pant transferase superfamily. AcpS family. Requires Mg(2+) as cofactor.

It is found in the cytoplasm. It catalyses the reaction apo-[ACP] + CoA = holo-[ACP] + adenosine 3',5'-bisphosphate + H(+). Functionally, transfers the 4'-phosphopantetheine moiety from coenzyme A to a Ser of acyl-carrier-protein. This is Holo-[acyl-carrier-protein] synthase from Escherichia coli (strain K12 / MC4100 / BW2952).